The chain runs to 262 residues: Small ribosomal subunit protein eS1z (262 aa).

Residues 1-18 (MAVGKNKRISKGRKGGKK) show a composition bias toward basic residues. Positions 1–21 (MAVGKNKRISKGRKGGKKKAV) are disordered.

This sequence belongs to the eukaryotic ribosomal protein eS1 family. As to quaternary structure, component of the small ribosomal subunit. Mature ribosomes consist of a small (40S) and a large (60S) subunit. The 40S subunit contains about 33 different proteins and 1 molecule of RNA (18S). The 60S subunit contains about 49 different proteins and 3 molecules of RNA (25S, 5.8S and 5S).

It is found in the cytoplasm. The protein is Small ribosomal subunit protein eS1z of Arabidopsis thaliana (Mouse-ear cress).